Reading from the N-terminus, the 104-residue chain is NADH-quinone oxidoreductase subunit K (104 aa).

The next 3 helical transmembrane spans lie at 4–24, 31–51, and 64–84; these read VPLS…LYGA, VIVL…LVAF, and IFAL…LAIL.

Belongs to the complex I subunit 4L family. In terms of assembly, NDH-1 is composed of 14 different subunits. Subunits NuoA, H, J, K, L, M, N constitute the membrane sector of the complex.

The protein resides in the cell membrane. The catalysed reaction is a quinone + NADH + 5 H(+)(in) = a quinol + NAD(+) + 4 H(+)(out). NDH-1 shuttles electrons from NADH, via FMN and iron-sulfur (Fe-S) centers, to quinones in the respiratory chain. The immediate electron acceptor for the enzyme in this species is believed to be a menaquinone. Couples the redox reaction to proton translocation (for every two electrons transferred, four hydrogen ions are translocated across the cytoplasmic membrane), and thus conserves the redox energy in a proton gradient. This is NADH-quinone oxidoreductase subunit K from Geobacillus sp. (strain WCH70).